A 1470-amino-acid chain; its full sequence is Collagen alpha-1(XVII) chain (1470 aa).

Disordered regions lie at residues 1 to 155 (MDVT…PSTR), 167 to 193 (KGSR…GTVE), and 422 to 452 (SAEN…GGAS). Residues 1–476 (MDVTKKSKRD…CGSCCSWWKW (476 aa)) are Cytoplasmic-facing. Positions 1 to 573 (MDVTKKSKRD…MTEQENGNLR (573 aa)) are nonhelical region (NC16). Positions 9–19 (RDGTEVTERIV) are enriched in basic and acidic residues. The span at 60 to 74 (GSSGYINSSGSIRGN) shows a compositional bias: low complexity. Composition is skewed to polar residues over residues 75–96 (ASTS…SPGS), 111–120 (EGSSSGNSSP), and 170–184 (RSAS…SNTL). Residues 146 to 231 (RLQSASPSTR…WSSTLPAGSS (86 aa)) form a necessary for interaction with DST and for the recruitment of DST to hemidesmosome region. Residues 430 to 452 (RGGGGGRGKGGGAGGGGGGGGAS) show a composition bias toward gly residues. A helical; Signal-anchor for type II membrane protein transmembrane segment spans residues 477-497 (LLGLLLTWLLLLGLLFGLIAL). Over 498 to 1470 (AEEVRKLKAR…RRKRSIAIKP (973 aa)) the chain is Extracellular. Ser-551 carries the post-translational modification Phosphoserine; by CK2. Disordered stretches follow at residues 568–873 (ENGN…FLSS), 885–999 (GVDL…SSSG), 1159–1181 (DYRN…NAWS), 1194–1220 (TAGL…GVSA), and 1249–1298 (FIVG…TNGG). Residues 574–1456 (GSPGPKGDMG…KGEKGDKGDQ (883 aa)) form a triple-helical region region. The span at 597–609 (PGIPGPLGHPGPE) shows a compositional bias: pro residues. Composition is skewed to low complexity over residues 742–755 (EPGA…AGAD) and 781–803 (DPGK…PGRP). Positions 827-848 (PGPPGPPGAMGPPGPPGTPGPA) are enriched in pro residues. A compositionally biased stretch (low complexity) spans 850–873 (PAGLPGQQGPRGEPGLAGDSFLSS). 6 stretches are compositionally biased toward pro residues: residues 891-914 (PPGP…PRGP), 940-949 (PPGPPGPPGP), 982-992 (PPGPPGPPGPP), 1166-1175 (PPGPPGPPGM), 1201-1215 (PGPP…PRGP), and 1253-1262 (PPGPPGPQGP). Asn-1273 carries an N-linked (GlcNAc...) asparagine glycan. Positions 1275 to 1290 (SSNSSARRGTSYSSST) are enriched in low complexity. Residue Asn-1395 is glycosylated (N-linked (GlcNAc...) asparagine). The disordered stretch occupies residues 1406–1470 (TYGTIPGPPG…RRKRSIAIKP (65 aa)). Residues 1434-1443 (PRGPPGPPGP) show a composition bias toward pro residues. A compositionally biased stretch (basic and acidic residues) spans 1446–1455 (NKGEKGDKGD). The segment at 1457–1470 (VYTGRRKRSIAIKP) is nonhelical region (NC1). Residues 1460–1470 (GRRKRSIAIKP) show a composition bias toward basic residues.

As to quaternary structure, homotrimers of alpha 1(XVII)chains. Interacts (via cytoplasmic region) with ITGB4 (via cytoplasmic region). Interacts (via cytoplasmic region) with DST (via N-terminus). Interacts (via N-terminus) with PLEC. Interacts (via cytoplasmic region) with DSP. In terms of processing, the intracellular/endo domain is disulfide-linked. Post-translationally, prolines at the third position of the tripeptide repeating unit (G-X-Y) are hydroxylated in some or all of the chains. The ectodomain is shedded from the surface of keratinocytes resulting in a 120-kDa soluble form, also named as 120 kDa linear IgA disease antigen homolog. The shedding is mediated by membrane-bound metalloproteases. This cleavage is inhibited by phosphorylation at Ser-551.

Its subcellular location is the cell junction. The protein localises to the hemidesmosome. It is found in the membrane. The protein resides in the secreted. It localises to the extracellular space. Its subcellular location is the extracellular matrix. The protein localises to the basement membrane. May play a role in the integrity of hemidesmosome and the attachment of basal keratinocytes to the underlying basement membrane. In terms of biological role, the 120 kDa linear IgA disease antigen homolog is an anchoring filament component involved in dermal-epidermal cohesion. This is Collagen alpha-1(XVII) chain (Col17a1) from Mus musculus (Mouse).